The following is a 424-amino-acid chain: GTPase Obg (424 aa).

The 158-residue stretch at 1–158 (MFIDTAKILV…RMINLEIKLL (158 aa)) folds into the Obg domain. The OBG-type G domain occupies 159–331 (ADVGLIGFPN…LIKEVTRQLS (173 aa)). GTP is bound by residues 165–172 (GFPNVGKS), 190–194 (FTTLK), 212–215 (DIPG), 282–285 (NKID), and 312–314 (SAA). Residues Ser172 and Thr192 each coordinate Mg(2+). The 80-residue stretch at 345-424 (RFMPEEKRFT…LNDFEFDFLL (80 aa)) folds into the OCT domain.

This sequence belongs to the TRAFAC class OBG-HflX-like GTPase superfamily. OBG GTPase family. As to quaternary structure, monomer. The cofactor is Mg(2+).

The protein resides in the cytoplasm. Its function is as follows. An essential GTPase which binds GTP, GDP and possibly (p)ppGpp with moderate affinity, with high nucleotide exchange rates and a fairly low GTP hydrolysis rate. Plays a role in control of the cell cycle, stress response, ribosome biogenesis and in those bacteria that undergo differentiation, in morphogenesis control. The polypeptide is GTPase Obg (Clostridium novyi (strain NT)).